Consider the following 339-residue polypeptide: DNA-directed RNA polymerase subunit alpha (339 aa).

Residues 1-235 (MTIQKNWQEL…DQLNVFVNFE (235 aa)) form an alpha N-terminal domain (alpha-NTD) region. The tract at residues 251-339 (FNPAFLKKVD…ELAKRFEDHY (89 aa)) is alpha C-terminal domain (alpha-CTD).

Belongs to the RNA polymerase alpha chain family. In terms of assembly, homodimer. The RNAP catalytic core consists of 2 alpha, 1 beta, 1 beta' and 1 omega subunit. When a sigma factor is associated with the core the holoenzyme is formed, which can initiate transcription.

It carries out the reaction RNA(n) + a ribonucleoside 5'-triphosphate = RNA(n+1) + diphosphate. In terms of biological role, DNA-dependent RNA polymerase catalyzes the transcription of DNA into RNA using the four ribonucleoside triphosphates as substrates. The protein is DNA-directed RNA polymerase subunit alpha of Nitrobacter winogradskyi (strain ATCC 25391 / DSM 10237 / CIP 104748 / NCIMB 11846 / Nb-255).